The primary structure comprises 404 residues: Acetylornithine aminotransferase (404 aa).

Pyridoxal 5'-phosphate is bound by residues 113 to 114 and Phe139; that span reads GT. Residue Arg142 participates in N(2)-acetyl-L-ornithine binding. 224–227 provides a ligand contact to pyridoxal 5'-phosphate; that stretch reads DEVQ. Lys253 is modified (N6-(pyridoxal phosphate)lysine). Residue Ser281 participates in N(2)-acetyl-L-ornithine binding. Thr282 serves as a coordination point for pyridoxal 5'-phosphate.

Belongs to the class-III pyridoxal-phosphate-dependent aminotransferase family. ArgD subfamily. Homodimer. Pyridoxal 5'-phosphate serves as cofactor.

Its subcellular location is the cytoplasm. The catalysed reaction is N(2)-acetyl-L-ornithine + 2-oxoglutarate = N-acetyl-L-glutamate 5-semialdehyde + L-glutamate. The protein operates within amino-acid biosynthesis; L-arginine biosynthesis; N(2)-acetyl-L-ornithine from L-glutamate: step 4/4. The protein is Acetylornithine aminotransferase of Mycobacterium leprae (strain TN).